The following is a 1463-amino-acid chain: Nucleoporin NUP152 (1463 aa).

3 disordered regions span residues 1–199 (MDPP…GRPG), 339–568 (GIPD…ELPA), and 609–1064 (TTKK…FGNT). Polar residues-rich tracts occupy residues 32–42 (STNSNSVTANA), 81–92 (GPSSKLSQSVSA), 144–155 (TSSKATSFSGAP), 175–191 (TTYT…QSFP), 367–378 (PSSSTFTHTASP), and 416–472 (PAKT…SSNI). Acidic residues predominate over residues 481–498 (KDEDNESDTGSEAEAEDE). Composition is skewed to low complexity over residues 511-523 (GASS…GGES) and 616-630 (AAAP…TPTT). Polar residues-rich tracts occupy residues 651-664 (IFGS…TSIP), 673-689 (PATS…TSAA), and 720-746 (TTES…TQPQ). Residues 729 to 732 (FQFG) form an FXFG 1 repeat. Residues 753-768 (KPPSTETPTEKPATTS) show a composition bias toward low complexity. Residues 777 to 789 (PATTSSLFGSATT) are compositionally biased toward polar residues. Positions 803-813 (TTTPADKPTTT) are enriched in low complexity. The segment covering 814–828 (NLFGSTSTQATSGSD) has biased composition (polar residues). An FXFG 2 repeat occupies 835–838 (FAFG). The segment covering 840 to 863 (TTESKPTTSLFGSTTPAPATSTEN) has biased composition (polar residues). Residues 870 to 881 (ATTTSATPATNT) are compositionally biased toward low complexity. Polar residues-rich tracts occupy residues 900–923 (GSST…STEQ), 940–961 (GSTS…TMTE), 968–987 (SIST…STTE), 998–1029 (STEQ…STEQ), and 1037–1055 (PAST…TTEN). The stretch at 910-913 (FQFG) is one FXFG 3 repeat. FXFG repeat units lie at residues 1074 to 1077 (FNFG), 1127 to 1130 (FNFG), 1141 to 1144 (FTFG), and 1152 to 1155 (FTFG). 2 disordered regions span residues 1155–1174 (GASS…PIFS) and 1179–1217 (QPSS…KHVP). Over residues 1156–1170 (ASSDSSNASNNASSA) the composition is skewed to low complexity. An FXFG 8 repeat occupies 1173-1176 (FSFG). Polar residues predominate over residues 1179–1199 (QPSSTPLFGQNNPPAASNIFA). Residues 1236 to 1239 (FTFG) form an FXFG 9 repeat. A compositionally biased stretch (low complexity) spans 1240-1271 (GASSLATTPAASTPEPSAANAAAAGEDQGASA). Disordered stretches follow at residues 1240–1335 (GASS…PWKV) and 1416–1463 (AALE…DEKK). The RanBD1 domain occupies 1289 to 1427 (GEEDESVVHE…LEEHKKANEK (139 aa)). Positions 1418–1463 (LEEHKKANEKKDGEKNEESEKKDEKQEEKKNEEKKDEKEEKKDEKK) are enriched in basic and acidic residues.

In terms of assembly, the nuclear pore complex (NPC) constitutes the exclusive means of nucleocytoplasmic transport. NPCs allow the passive diffusion of ions and small molecules and the active, nuclear transport receptor-mediated bidirectional transport of macromolecules such as proteins, RNAs, ribonucleoparticles (RNPs), and ribosomal subunits across the nuclear envelope. The 55-60 MDa NPC is composed of at least 28 different subunits: AMO1, ELYS, GLE1, GLE2, MLP1, NDC1, NIC96, NSP1, NUP133, NUP145, NUP152, NUP159, NUP170, NUP188, NUP192, NUP37, NUP49, NUP53, NUP56, NUP57, NUP82, NUP84, NUP85, POM152, POM33, POM34, SEC13 and SEH1. Due to its 8-fold rotational symmetry, all subunits are present with 8 copies or multiples thereof.

It is found in the nucleus. It localises to the nuclear pore complex. Its subcellular location is the nucleus membrane. Its function is as follows. Functions as a component of the nuclear pore complex (NPC). NPC components, collectively referred to as nucleoporins (NUPs), can play the role of both NPC structural components and of docking or interaction partners for transiently associated nuclear transport factors. Active directional transport is assured by both, a Phe-Gly (FG) repeat affinity gradient for these transport factors across the NPC and a transport cofactor concentration gradient across the nuclear envelope (GSP1 and GSP2 GTPases associated predominantly with GTP in the nucleus, with GDP in the cytoplasm). This chain is Nucleoporin NUP152 (NUP152), found in Chaetomium thermophilum (strain DSM 1495 / CBS 144.50 / IMI 039719) (Thermochaetoides thermophila).